Reading from the N-terminus, the 1786-residue chain is Protein TIC 214 (1786 aa).

6 consecutive transmembrane segments (helical) span residues Ile-19–Gly-39, Phe-68–Leu-88, Pro-91–His-111, Val-133–Leu-153, Val-176–Ile-196, and Ile-227–Ile-247. Residues Ser-1007–Tyr-1046 adopt a coiled-coil conformation.

Belongs to the TIC214 family. Part of the Tic complex. Component of the 1-MD complex, composed of TIC20-I, TIC214, TIC100 and TIC56. Interacts with the translocating preproteins. Hydrolysis of ATP is essential for the formation of this complex. The 1-MD complex interacts with TIC21.

It is found in the plastid. Its subcellular location is the chloroplast inner membrane. In terms of biological role, involved in protein precursor import into chloroplasts. May be part of an intermediate translocation complex acting as a protein-conducting channel at the inner envelope. The protein is Protein TIC 214 of Arabidopsis thaliana (Mouse-ear cress).